The primary structure comprises 465 residues: Alpha-2A adrenergic receptor (465 aa).

Residues 1 to 48 (MFRQEQPLAEGSFAPMGSLQPDAGNSSWNGTEAPGGGTRATPYSLQVT) are Extracellular-facing. N-linked (GlcNAc...) asparagine glycosylation is found at Asn-25 and Asn-29. A helical transmembrane segment spans residues 49–74 (LTLVCLAGLLMLFTVFGNVLVIIAVF). At 75-85 (TSRALKAPQNL) the chain is on the cytoplasmic side. The chain crosses the membrane as a helical span at residues 86–111 (FLVSLASADILVATLVIPFSLANEVM). Residues 112–121 (GYWYFGKVWC) are Extracellular-facing. The cysteines at positions 121 and 203 are disulfide-linked. The chain crosses the membrane as a helical span at residues 122 to 144 (EIYLALDVLFCTSSIVHLCAISL). Residues 145 to 164 (DRYWSITQAIEYNLKRTPRR) are Cytoplasmic-facing. A helical membrane pass occupies residues 165 to 188 (IKAIIVTVWVISAVISFPPLISIE). Over 189–207 (KKGAGGGQQPAEPSCKIND) the chain is Extracellular. A helical membrane pass occupies residues 208 to 232 (QKWYVISSSIGSFFAPCLIMILVYV). The Cytoplasmic segment spans residues 233–389 (RIYQIAKRRT…RQNREKRFTF (157 aa)). Residues 242–378 (TRVPPSRRGP…GGGAKASRWR (137 aa)) form a disordered region. A compositionally biased stretch (basic and acidic residues) spans 313–330 (SSEHAERPPGPRRPDRGP). Ser-346 carries the post-translational modification Phosphoserine. The segment covering 353-363 (GAAGPGASGSG) has biased composition (gly residues). Arg-368 bears the Omega-N-methylarginine mark. The chain crosses the membrane as a helical span at residues 390-414 (VLAVVIGVFVVCWFPFFFTYTLIAV). Over 415 to 424 (GCPVPSQLFN) the chain is Extracellular. A helical transmembrane segment spans residues 425–445 (FFFWFGYCNSSLNPVIYTIFN). The Cytoplasmic segment spans residues 446-465 (HDFRRAFKKILCRGDRKRIV). The S-palmitoyl cysteine moiety is linked to residue Cys-457.

Belongs to the G-protein coupled receptor 1 family. Adrenergic receptor subfamily. ADRA2A sub-subfamily.

It localises to the cell membrane. Functionally, alpha-2 adrenergic receptors mediate the catecholamine-induced inhibition of adenylate cyclase through the action of G proteins. In Mus musculus (Mouse), this protein is Alpha-2A adrenergic receptor.